The following is a 196-amino-acid chain: Probable thymidylate kinase (196 aa).

Residue 8 to 15 (GIDASGKT) coordinates ATP.

Belongs to the thymidylate kinase family.

It carries out the reaction dTMP + ATP = dTDP + ADP. The chain is Probable thymidylate kinase from Metallosphaera sedula (strain ATCC 51363 / DSM 5348 / JCM 9185 / NBRC 15509 / TH2).